A 352-amino-acid polypeptide reads, in one-letter code: N-acetyl-gamma-glutamyl-phosphate reductase (352 aa).

Cys151 is an active-site residue.

Belongs to the NAGSA dehydrogenase family. Type 1 subfamily.

The protein resides in the cytoplasm. It carries out the reaction N-acetyl-L-glutamate 5-semialdehyde + phosphate + NADP(+) = N-acetyl-L-glutamyl 5-phosphate + NADPH + H(+). The protein operates within amino-acid biosynthesis; L-arginine biosynthesis; N(2)-acetyl-L-ornithine from L-glutamate: step 3/4. Its function is as follows. Catalyzes the NADPH-dependent reduction of N-acetyl-5-glutamyl phosphate to yield N-acetyl-L-glutamate 5-semialdehyde. This is N-acetyl-gamma-glutamyl-phosphate reductase from Renibacterium salmoninarum (strain ATCC 33209 / DSM 20767 / JCM 11484 / NBRC 15589 / NCIMB 2235).